Reading from the N-terminus, the 163-residue chain is Developmental pluripotency-associated protein 3 (163 aa).

As to expression, preferentially expressed in oocyte.

Its subcellular location is the nucleus. It localises to the cytoplasm. Its function is as follows. Primordial germ cell (PGCs)-specific protein involved in epigenetic chromatin reprogramming in the zygote following fertilization. In zygotes, DNA demethylation occurs selectively in the paternal pronucleus before the first cell division, while the adjacent maternal pronucleus and certain paternally-imprinted loci are protected from this process. Participates in protection of DNA methylation in the maternal pronucleus by preventing conversion of 5mC to 5hmC: specifically recognizes and binds histone H3 dimethylated at 'Lys-9' (H3K9me2) on maternal genome, and protects maternal genome from TET3-mediated conversion to 5hmC and subsequent DNA demethylation. Does not bind paternal chromatin, which is mainly packed into protamine and does not contain much H3K9me2 mark. Also protects imprinted loci that are marked with H3K9me2 in mature sperm from DNA demethylation in early embryogenesis. May be important for the totipotent/pluripotent states continuing through preimplantation development. Also involved in chromatin condensation in oocytogenesis. The protein is Developmental pluripotency-associated protein 3 (DPPA3) of Bos taurus (Bovine).